The primary structure comprises 370 residues: Aminomethyltransferase (370 aa).

Belongs to the GcvT family. As to quaternary structure, the glycine cleavage system is composed of four proteins: P, T, L and H.

The enzyme catalyses N(6)-[(R)-S(8)-aminomethyldihydrolipoyl]-L-lysyl-[protein] + (6S)-5,6,7,8-tetrahydrofolate = N(6)-[(R)-dihydrolipoyl]-L-lysyl-[protein] + (6R)-5,10-methylene-5,6,7,8-tetrahydrofolate + NH4(+). Functionally, the glycine cleavage system catalyzes the degradation of glycine. In Stenotrophomonas maltophilia (strain K279a), this protein is Aminomethyltransferase.